The chain runs to 218 residues: Riboflavin synthase (218 aa).

Lumazine-binding repeat units follow at residues 1 to 97 (MFTG…LGGH) and 98 to 194 (LVSG…EKLI). 2,4-dihydroxypteridine contacts are provided by residues 4–6 (GII), 48–50 (CLT), 62–67 (DLSLET), 101–103 (GHV), Lys-136, 145–147 (SLT), and 159–164 (TIVPHT).

As to quaternary structure, homotrimer.

It carries out the reaction 2 6,7-dimethyl-8-(1-D-ribityl)lumazine + H(+) = 5-amino-6-(D-ribitylamino)uracil + riboflavin. It functions in the pathway cofactor biosynthesis; riboflavin biosynthesis; riboflavin from 2-hydroxy-3-oxobutyl phosphate and 5-amino-6-(D-ribitylamino)uracil: step 2/2. Functionally, catalyzes the dismutation of two molecules of 6,7-dimethyl-8-ribityllumazine, resulting in the formation of riboflavin and 5-amino-6-(D-ribitylamino)uracil. This is Riboflavin synthase (ribE) from Photobacterium leiognathi.